The chain runs to 345 residues: Probable glucan endo-1,3-beta-glucosidase BG4 (345 aa).

Residues 1 to 22 form the signal peptide; it reads MLYSPKKLFLFFLSCIVLYVNS. Asn-23 and Asn-119 each carry an N-linked (GlcNAc...) asparagine glycan. The active-site Proton donor is Glu-128. The Nucleophile role is filled by Glu-267. 2 N-linked (GlcNAc...) asparagine glycosylation sites follow: Asn-277 and Asn-306.

Belongs to the glycosyl hydrolase 17 family.

It is found in the secreted. It carries out the reaction Hydrolysis of (1-&gt;3)-beta-D-glucosidic linkages in (1-&gt;3)-beta-D-glucans.. Its function is as follows. May play a role in plant defense against pathogens. The sequence is that of Probable glucan endo-1,3-beta-glucosidase BG4 from Arabidopsis thaliana (Mouse-ear cress).